Reading from the N-terminus, the 163-residue chain is uncharacterized protein (163 aa).

This is an uncharacterized protein from Caenorhabditis elegans.